Consider the following 67-residue polypeptide: Large ribosomal subunit protein bL35 (67 aa).

The protein belongs to the bacterial ribosomal protein bL35 family.

The polypeptide is Large ribosomal subunit protein bL35 (Sinorhizobium fredii (strain NBRC 101917 / NGR234)).